The primary structure comprises 544 residues: Cytochrome P450 monooxygenase verL (544 aa).

The helical transmembrane segment at 3–23 (VALFPILPIGCLLIYIIFKLW) threads the bilayer. A heme-binding site is contributed by cysteine 446. The tract at residues 520–544 (QEKGIDGWKGKKESSSEENRGVSSR) is disordered.

The protein belongs to the cytochrome P450 family. Heme serves as cofactor.

The protein resides in the membrane. Its pathway is mycotoxin biosynthesis. In terms of biological role, cytochrome P450 monooxygenase; part of the gene cluster that mediates the biosynthesis of 11'-deoxyverticillin A, one of the dimeric epipolythiodioxopiperazines (ETPs) from the verticillin family that act as mycotoxins. 11'-deoxyverticillin A is required for normal conidiation. The nonribosomal peptide synthetase verP is speculated to be responsible for condensation of amino acids to form the carbon skeleton of verticillin, whereas the cluster-specific tailoring enzymes are involved in further modifications leading to the production of 11'-deoxyverticillin A. This chain is Cytochrome P450 monooxygenase verL, found in Clonostachys rogersoniana.